Here is a 377-residue protein sequence, read N- to C-terminus: MLLHNKTLAGKALAFIAEEGYVPSMREKFLGWNVPPEYSDLVHPHWRAFPAPGKHFHIGLAIIYSMLLIMSLVGNCCVIWIFSTSKSLRTPSNMFIVSLAIFDIIMAFEMPMLVISSFMERMIGWEIGCDVYSVFGSISGMGQAMTNAAIAFDRYRTISCPIDGRLNSKQAAVIIAFTWFWVTPFTVLPLLKVWGRYTTEGFLTTCSFDFLTDDEDTKVFVTCIFIWAYVIPLIFIILFYSRLLSSIRNHEKMLREQAKKMNVKSLVSNQDKERSAEVRIAKVAFTIFFLFLLAWTPYATVALIGVYGNRELLTPVSTMLPAVFAKTVSCIDPWIYAINHPRYRQELQKRCKWMGIHEPETTSDATSAQTEKIKTDE.

Over 1–56 (MLLHNKTLAGKALAFIAEEGYVPSMREKFLGWNVPPEYSDLVHPHWRAFPAPGKHF) the chain is Extracellular. Asparagine 5 is a glycosylation site (N-linked (GlcNAc...) asparagine). A helical membrane pass occupies residues 57–81 (HIGLAIIYSMLLIMSLVGNCCVIWI). Over 82-93 (FSTSKSLRTPSN) the chain is Cytoplasmic. The chain crosses the membrane as a helical span at residues 94 to 119 (MFIVSLAIFDIIMAFEMPMLVISSFM). Residues 120–132 (ERMIGWEIGCDVY) are Extracellular-facing. A disulfide bond links cysteine 129 and cysteine 206. The helical transmembrane segment at 133–152 (SVFGSISGMGQAMTNAAIAF) threads the bilayer. The Cytoplasmic segment spans residues 153–170 (DRYRTISCPIDGRLNSKQ). Residues 171–195 (AAVIIAFTWFWVTPFTVLPLLKVWG) form a helical membrane-spanning segment. Residues 196 to 219 (RYTTEGFLTTCSFDFLTDDEDTKV) lie on the Extracellular side of the membrane. The chain crosses the membrane as a helical span at residues 220-247 (FVTCIFIWAYVIPLIFIILFYSRLLSSI). At 248–282 (RNHEKMLREQAKKMNVKSLVSNQDKERSAEVRIAK) the chain is on the cytoplasmic side. Residues 283–306 (VAFTIFFLFLLAWTPYATVALIGV) form a helical membrane-spanning segment. At 307 to 314 (YGNRELLT) the chain is on the extracellular side. The chain crosses the membrane as a helical span at residues 315–339 (PVSTMLPAVFAKTVSCIDPWIYAIN). Residue lysine 326 is modified to N6-(retinylidene)lysine. The Cytoplasmic segment spans residues 340–377 (HPRYRQELQKRCKWMGIHEPETTSDATSAQTEKIKTDE).

The protein belongs to the G-protein coupled receptor 1 family. Opsin subfamily. Post-translationally, phosphorylated on some or all of the serine and threonine residues present in the C-terminal region. In terms of tissue distribution, expressed in the dorsal region of the retina and sparsely expressed in the ventral region.

It localises to the membrane. Its function is as follows. Visual pigments are the light-absorbing molecules that mediate vision. They consist of an apoprotein, opsin, covalently linked to 11-cis-retinal. The protein is Opsin, blue-sensitive (BLOP) of Apis mellifera (Honeybee).